The chain runs to 553 residues: Solute carrier family 22 member 2 (553 aa).

Residues 1-21 (MPTVDDILEHIGEFHLFQKQT) lie on the Cytoplasmic side of the membrane. Residues 22-42 (FFLLALLSGAFTPIYVGIVFL) traverse the membrane as a helical segment. At 43–150 (GFTPNHHCRS…LVCAHSWMLD (108 aa)) the chain is on the extracellular side. N-linked (GlcNAc...) asparagine glycosylation occurs at asparagine 71. The chain crosses the membrane as a helical span at residues 151-171 (LFQSLVNVGFFIGAVGIGYLA). Residues 172–177 (DRFGRK) are Cytoplasmic-facing. A helical transmembrane segment spans residues 178–198 (FCLLVTILINAISGVLMAISP). Over 199–210 (NYAWMLVFRFLQ) the chain is Extracellular. The chain crosses the membrane as a helical span at residues 211 to 231 (GLVSKAGWLIGYILITEFVGL). Residues 232–238 (GYRRTVG) lie on the Cytoplasmic side of the membrane. Residues 239 to 259 (ICYQIAFTVGLLILAGVAYAL) form a helical membrane-spanning segment. Residues 260–263 (PNWR) are Extracellular-facing. The helical transmembrane segment at 264–284 (WLQFAVTLPNFCFLLYFWCIP) threads the bilayer. Residues 284-288 (PESPR) carry the Proline-rich sequence motif. The Cytoplasmic portion of the chain corresponds to 285–348 (ESPRWLISQN…VRTPQIRKHT (64 aa)). The helical transmembrane segment at 349–369 (LILMYNWFTSSVLYQGLIMHM) threads the bilayer. Residues 370–375 (GLAGDN) lie on the Extracellular side of the membrane. A helical transmembrane segment spans residues 376–396 (IYLDFFYSALVEFPAAFIIIL). Topologically, residues 397–404 (TIDRIGRR) are cytoplasmic. Residues 405-425 (YPWAVSNMVAGAACLASVFIP) traverse the membrane as a helical segment. The Extracellular segment spans residues 426–432 (DDLQWLK). The chain crosses the membrane as a helical span at residues 433–453 (ITVACLGRMGITIAYEMVCLV). The Cytoplasmic portion of the chain corresponds to 454–464 (NAELYPTYIRN). A helical transmembrane segment spans residues 465–485 (LAVLVCSSMCDIGGIVTPFLV). The Extracellular portion of the chain corresponds to 486–494 (YRLTDIWLE). Residues 495-515 (FPLVVFAVVGLVAGGLVLLLP) form a helical membrane-spanning segment. Residues 516 to 553 (ETKGKALPETIEDAEKMQRPRKKKEKRIYLQVKKAELS) are Cytoplasmic-facing.

It belongs to the major facilitator (TC 2.A.1) superfamily. Organic cation transporter (TC 2.A.1.19) family. Tyrosine phosphorylated by tyrosine-protein kinase YES1. Expressed in kidney and ureter. To a lower extent, also expressed in brain and embryo.

It is found in the basolateral cell membrane. Its subcellular location is the basal cell membrane. The protein resides in the apical cell membrane. The enzyme catalyses (R)-noradrenaline(out) = (R)-noradrenaline(in). The catalysed reaction is (R)-adrenaline(out) = (R)-adrenaline(in). It catalyses the reaction serotonin(out) = serotonin(in). It carries out the reaction dopamine(out) = dopamine(in). The enzyme catalyses histamine(out) = histamine(in). The catalysed reaction is thiamine(in) = thiamine(out). It catalyses the reaction creatinine(in) = creatinine(out). It carries out the reaction 1-methylnicotinamide(out) = 1-methylnicotinamide(in). The enzyme catalyses guanidine(out) = guanidine(in). The catalysed reaction is choline(out) = choline(in). It catalyses the reaction agmatine(out) = agmatine(in). It carries out the reaction putrescine(out) = putrescine(in). The enzyme catalyses spermidine(in) = spermidine(out). The catalysed reaction is tyramine(in) = tyramine(out). It catalyses the reaction L-histidyl-L-proline diketopiperazine(in) = L-histidyl-L-proline diketopiperazine(out). It carries out the reaction (R)-salsolinol(in) = (R)-salsolinol(out). The enzyme catalyses N-methyl-(R)-salsolinol(in) = N-methyl-(R)-salsolinol(out). The catalysed reaction is acetylcholine(in) = acetylcholine(out). It catalyses the reaction prostaglandin F2alpha(out) = prostaglandin F2alpha(in). It carries out the reaction prostaglandin E2(out) = prostaglandin E2(in). Tyrosine phosphorylation of the transporter leads to activation of the transport activity. TEA uptake is activated by tyrosine phosphorylation. Inhibited by cGMP, most likely through a cGMP-binding protein that interacts with OCT2. Its function is as follows. Electrogenic voltage-dependent transporter that mediates the transport of a variety of organic cations such as endogenous bioactive amines, cationic drugs and xenobiotics. Functions as a Na(+)-independent, bidirectional uniporter. Cation cellular uptake or release is driven by the electrochemical potential, i.e. membrane potential and concentration gradient. However, may also engage electroneutral cation exchange when saturating concentrations of cation substrates are reached. Predominantly expressed at the basolateral membrane of hepatocytes and proximal tubules and involved in the uptake and disposition of cationic compounds by hepatic and renal clearance from the blood flow. Implicated in monoamine neurotransmitters uptake such as histamine, dopamine, adrenaline/epinephrine, noradrenaline/norepinephrine, serotonin and tyramine, thereby supporting a physiological role in the central nervous system by regulating interstitial concentrations of neurotransmitters. Also capable of transporting dopaminergic neuromodulators cyclo(his-pro), salsolinol and N-methyl-salsolinol, thereby involved in the maintenance of dopaminergic cell integrity in the central nervous system. Mediates the bidirectional transport of acetylcholine (ACh) at the apical membrane of ciliated cell in airway epithelium, thereby playing a role in luminal release of ACh from bronchial epithelium. Also transports guanidine and endogenous monoamines such as vitamin B1/thiamine, creatinine and N-1-methylnicotinamide (NMN). Mediates the uptake and efflux of quaternary ammonium compound choline. Mediates the bidirectional transport of polyamine agmatine and the uptake of polyamines putrescine and spermidine. Able to transport non-amine endogenous compounds such as prostaglandin E2 (PGE2) and prostaglandin F2-alpha (PGF2-alpha). Also involved in the uptake of xenobiotic 4-(4-(dimethylamino)styryl)-N-methylpyridinium (ASP). May contribute to regulate the transport of organic compounds in testis across the blood-testis-barrier. The chain is Solute carrier family 22 member 2 from Mus musculus (Mouse).